We begin with the raw amino-acid sequence, 410 residues long: Exopolygalacturonase (410 aa).

An N-terminal signal peptide occupies residues 1 to 22; sequence MACIDNAMRALFLLALFCVVHG. Residues asparagine 89 and asparagine 201 are each glycosylated (N-linked (GlcNAc...) asparagine). PbH1 repeat units follow at residues 192–218, 219–240, 242–262, 272–293, and 337–377; these read CKDMLIKDVNVTAPGDSPNTDGIHMGD, SSGVTITNTVIGVGDDCISIGP, TSKVNITGVTCGPGHGISIGS, VTDINVKDCTLKKTANGVRIKA, and ASKV…TMDD. The active-site Proton donor is aspartate 233. The cysteines at positions 235 and 252 are disulfide-linked. Asparagine 246 is a glycosylation site (N-linked (GlcNAc...) asparagine). Histidine 256 is an active-site residue. Residue asparagine 349 is glycosylated (N-linked (GlcNAc...) asparagine). Cysteine 364 and cysteine 370 are oxidised to a cystine. An N-linked (GlcNAc...) asparagine glycan is attached at asparagine 387. A disulfide bridge links cysteine 393 with cysteine 409.

This sequence belongs to the glycosyl hydrolase 28 family. In terms of tissue distribution, pollen.

The protein localises to the secreted. The protein resides in the cell wall. The enzyme catalyses [(1-&gt;4)-alpha-D-galacturonosyl](n) + H2O = alpha-D-galacturonate + [(1-&gt;4)-alpha-D-galacturonosyl](n-1). May function in depolymerizing pectin during pollen development, germination, and tube growth. Acts as an exo-polygalacturonase. The sequence is that of Exopolygalacturonase (PG2C) from Zea mays (Maize).